The following is a 154-amino-acid chain: 6,7-dimethyl-8-ribityllumazine synthase (154 aa).

Residues F26, 60–62 (ALE), and 84–86 (CII) each bind 5-amino-6-(D-ribitylamino)uracil. 89-90 (ET) is a binding site for (2S)-2-hydroxy-3-oxobutyl phosphate. H92 (proton donor) is an active-site residue. N117 is a binding site for 5-amino-6-(D-ribitylamino)uracil. R131 lines the (2S)-2-hydroxy-3-oxobutyl phosphate pocket.

The protein belongs to the DMRL synthase family.

The enzyme catalyses (2S)-2-hydroxy-3-oxobutyl phosphate + 5-amino-6-(D-ribitylamino)uracil = 6,7-dimethyl-8-(1-D-ribityl)lumazine + phosphate + 2 H2O + H(+). The protein operates within cofactor biosynthesis; riboflavin biosynthesis; riboflavin from 2-hydroxy-3-oxobutyl phosphate and 5-amino-6-(D-ribitylamino)uracil: step 1/2. In terms of biological role, catalyzes the formation of 6,7-dimethyl-8-ribityllumazine by condensation of 5-amino-6-(D-ribitylamino)uracil with 3,4-dihydroxy-2-butanone 4-phosphate. This is the penultimate step in the biosynthesis of riboflavin. The protein is 6,7-dimethyl-8-ribityllumazine synthase of Leptothrix cholodnii (strain ATCC 51168 / LMG 8142 / SP-6) (Leptothrix discophora (strain SP-6)).